A 114-amino-acid chain; its full sequence is Probable 4-amino-4-deoxy-L-arabinose-phosphoundecaprenol flippase subunit ArnE (114 aa).

3 helical membrane-spanning segments follow: residues 41–61 (PWLIASVAALGCGMLLWIYLL), 64–84 (LPLSMAYPMLSINLVLVLVGS), and 94–114 (YHNWLGVGAIIVGALLLGGLL). The EamA domain occupies 43–112 (LIASVAALGC…IIVGALLLGG (70 aa)).

This sequence belongs to the ArnE family. Heterodimer of ArnE and ArnF.

The protein localises to the cell inner membrane. Its pathway is bacterial outer membrane biogenesis; lipopolysaccharide biosynthesis. Functionally, translocates 4-amino-4-deoxy-L-arabinose-phosphoundecaprenol (alpha-L-Ara4N-phosphoundecaprenol) from the cytoplasmic to the periplasmic side of the inner membrane. This chain is Probable 4-amino-4-deoxy-L-arabinose-phosphoundecaprenol flippase subunit ArnE, found in Aeromonas hydrophila subsp. hydrophila (strain ATCC 7966 / DSM 30187 / BCRC 13018 / CCUG 14551 / JCM 1027 / KCTC 2358 / NCIMB 9240 / NCTC 8049).